The following is a 512-amino-acid chain: ATP synthase subunit alpha 2 (512 aa).

Residue 169–176 (GDRQTGKT) coordinates ATP.

It belongs to the ATPase alpha/beta chains family. F-type ATPases have 2 components, CF(1) - the catalytic core - and CF(0) - the membrane proton channel. CF(1) has five subunits: alpha(3), beta(3), gamma(1), delta(1), epsilon(1). CF(0) has four main subunits: a(1), b(1), b'(1) and c(9-12).

It localises to the cell inner membrane. The enzyme catalyses ATP + H2O + 4 H(+)(in) = ADP + phosphate + 5 H(+)(out). Its function is as follows. Produces ATP from ADP in the presence of a proton gradient across the membrane. The alpha chain is a regulatory subunit. The protein is ATP synthase subunit alpha 2 of Dinoroseobacter shibae (strain DSM 16493 / NCIMB 14021 / DFL 12).